The primary structure comprises 253 residues: Low affinity immunoglobulin gamma Fc region receptor III-A (253 aa).

Residues 1–20 (MGQPLPPVALLLLVSASSRA) form the signal peptide. The Extracellular segment spans residues 21–207 (ADVPKALVLL…ISSSVLPWHQ (187 aa)). 2 consecutive Ig-like C2-type domains span residues 24–90 (PKAL…YRCQ) and 99–189 (PVQL…VTIT). 2 cysteine pairs are disulfide-bonded: Cys47/Cys89 and Cys128/Cys172. 4 N-linked (GlcNAc...) asparagine glycosylation sites follow: Asn56, Asn63, Asn165, and Asn180. The helical transmembrane segment at 208–226 (IAFCLVMGLLLAADTGLYF) threads the bilayer. Topologically, residues 227-253 (SVQRDLRSSQRARKEHTLGWSLGSQDK) are cytoplasmic.

In terms of assembly, forms a heterooligomeric complex with ITAM-containing signaling subunits FCER1G. Interacts (via transmembrane domain) with signaling subunits; this interaction is a prerequisite for receptor complex expression on the cell surface and intracellular signal transduction. Binds the Fc region of antigen-complexed IgG.

The protein localises to the cell membrane. In terms of biological role, receptor for the invariable Fc fragment of immunoglobulin gamma (IgG). Optimally activated upon binding of clustered antigen-IgG complexes displayed on cell surfaces, triggers lysis of antibody-coated cells, a process known as antibody-dependent cellular cytotoxicity (ADCC). Does not bind free monomeric IgG, thus avoiding inappropriate effector cell activation in the absence of antigenic trigger. Mediates IgG effector functions on natural killer (NK) cells. Binds antigen-IgG complexes generated upon infection and triggers NK cell-dependent cytokine production and degranulation to limit viral load and propagation. Fc-binding subunit that associates with FCER1G adapter to form functional signaling complexes. Following the engagement of antigen-IgG complexes, triggers phosphorylation of immunoreceptor tyrosine-based activation motif (ITAM)-containing adapters with subsequent activation of phosphatidylinositol 3-kinase signaling and sustained elevation of intracellular calcium that ultimately drive NK cell activation. Mediates enhanced ADCC in response to afucosylated IgGs. This is Low affinity immunoglobulin gamma Fc region receptor III-A from Oryctolagus cuniculus (Rabbit).